The following is a 746-amino-acid chain: EF-hand domain-containing family member C2 (746 aa).

DM10 domains follow at residues 75–182, 226–367, and 429–536; these read DKQV…RKMG, DGHV…RTKY, and ESNT…EKHA. The 36-residue stretch at 557–592 folds into the EF-hand domain; that stretch reads PRSREIRQVFAAADPQHTKVIEYDPFRNLIVSITDG.

The protein resides in the cytoplasm. Its subcellular location is the cytoskeleton. It localises to the cilium axoneme. Functionally, microtubule inner protein (MIP) part of the dynein-decorated doublet microtubules (DMTs) in cilia axoneme, which is required for motile cilia beating. This is EF-hand domain-containing family member C2 (EFHC2) from Gallus gallus (Chicken).